Reading from the N-terminus, the 417-residue chain is L-rhamnose isomerase (417 aa).

Positions 261, 293, and 295 each coordinate Mn(2+).

Belongs to the rhamnose isomerase family. Mn(2+) is required as a cofactor.

The protein localises to the cytoplasm. The enzyme catalyses L-rhamnopyranose = L-rhamnulose. It functions in the pathway carbohydrate degradation; L-rhamnose degradation; glycerone phosphate from L-rhamnose: step 1/3. Catalyzes the interconversion of L-rhamnose and L-rhamnulose. This chain is L-rhamnose isomerase, found in Oceanobacillus iheyensis (strain DSM 14371 / CIP 107618 / JCM 11309 / KCTC 3954 / HTE831).